The primary structure comprises 199 residues: MTEYKPTVRLATRDDVPRAVRTLAAAFADYPATRHTVDPDRHIERVTELQELFLTRVGLDIGKVWVADDGAAVAVWTTPESVEAGAVFAEIGPRMAELSGSRLAAQQQMEGLLAPHRPKEPAWFLATVGVSPDHQGKGLGSAVVLPGVEAAERAGVPAFLETSAPRNLPFYERLGFTVTADVEVPEGPRTWCMTRKPGA.

Residues 6-198 (PTVRLATRDD…RTWCMTRKPG (193 aa)) enclose the N-acetyltransferase domain.

In terms of biological role, detoxification of puromycin. The sequence is that of Puromycin N-acetyltransferase (pac) from Streptomyces alboniger.